Here is a 321-residue protein sequence, read N- to C-terminus: tRNA-dihydrouridine synthase B (321 aa).

Residues 16-18 (PMA) and Gln70 each bind FMN. Cys100 acts as the Proton donor in catalysis. Residues Lys139, 200–202 (NGD), and 224–225 (GR) contribute to the FMN site.

The protein belongs to the Dus family. DusB subfamily. FMN serves as cofactor.

It catalyses the reaction a 5,6-dihydrouridine in tRNA + NAD(+) = a uridine in tRNA + NADH + H(+). The catalysed reaction is a 5,6-dihydrouridine in tRNA + NADP(+) = a uridine in tRNA + NADPH + H(+). Its function is as follows. Catalyzes the synthesis of 5,6-dihydrouridine (D), a modified base found in the D-loop of most tRNAs, via the reduction of the C5-C6 double bond in target uridines. This is tRNA-dihydrouridine synthase B from Salmonella typhi.